Reading from the N-terminus, the 103-residue chain is Large ribosomal subunit protein mL63 (103 aa).

Belongs to the mitochondrion-specific ribosomal protein mL63 family.

Its subcellular location is the mitochondrion. This is Large ribosomal subunit protein mL63 (mrpl57) from Danio rerio (Zebrafish).